Here is a 492-residue protein sequence, read N- to C-terminus: Ribose import ATP-binding protein RbsA (492 aa).

ABC transporter domains are found at residues 3–239 (IEMK…VGRS) and 249–492 (AEIR…TGGQ). 35–42 (GENGAGKS) contacts ATP.

Belongs to the ABC transporter superfamily. Ribose importer (TC 3.A.1.2.1) family. The complex is composed of an ATP-binding protein (RbsA), two transmembrane proteins (RbsC) and a solute-binding protein (RbsB).

Its subcellular location is the cell membrane. The enzyme catalyses D-ribose(out) + ATP + H2O = D-ribose(in) + ADP + phosphate + H(+). Its function is as follows. Part of the ABC transporter complex RbsABC involved in ribose import. Responsible for energy coupling to the transport system. This Lactococcus lactis subsp. lactis (strain IL1403) (Streptococcus lactis) protein is Ribose import ATP-binding protein RbsA.